The primary structure comprises 329 residues: Strigolactones hydrolase CXE15 (329 aa).

An Involved in the stabilization of the negatively charged intermediate by the formation of the oxyanion hole motif is present at residues 83-85; the sequence is HGG. (-)-2'-epi-GR24 contacts are provided by Gly-85, Gly-86, Ser-169, and Ser-170. The active-site Nucleophile is the Ser-169. Active-site residues include Glu-271 and His-302.

The protein belongs to the 'GDXG' lipolytic enzyme family. As to expression, expressed in axillary buds, leaves, stems, hypocotyls, flowers, siliques, and vasculatures of shoots and roots.

It is found in the nucleus. Its subcellular location is the cytoplasm. The protein resides in the cytosol. It catalyses the reaction (-)-2'-epi-GR24 + H2O = (-)-2'-epi-GR24 ABC-rings + 5-hydroxy-3-methylfuran-2(5H)-one. The enzyme catalyses 5-deoxystrigol + H2O = 5-deoxystrigol ABC-rings + 5-hydroxy-3-methylfuran-2(5H)-one. It carries out the reaction orobanchol + H2O = orobanchol ABC-rings + 5-hydroxy-3-methylfuran-2(5H)-one. Functionally, binds to strigolactones (SLs) such as (-)-2'-epi-GR24(4DO), 5-deoxystrigol (5DS) and orobanchol, and catalyzes their hydrolysis; SL are phytohormones controlling shoot branching and communications between plants and microorganisms. Promotes shoot branching by dampening SL-inhibited axillary bud outgrowth. This chain is Strigolactones hydrolase CXE15, found in Arabidopsis thaliana (Mouse-ear cress).